Reading from the N-terminus, the 147-residue chain is Sec-independent protein translocase protein TatB (147 aa).

The helical transmembrane segment at 1 to 21 threads the bilayer; that stretch reads MFDISFSEILVIAAVALIVIG. A compositionally biased stretch (basic and acidic residues) spans 67–88; sequence EETGRSIENSVHTELDKFRETV. Residues 67-147 are disordered; sequence EETGRSIENS…GVNRERETAE (81 aa). The span at 103 to 117 shows a compositional bias: low complexity; it reads APAGESSPPQNSSPA.

It belongs to the TatB family. The Tat system comprises two distinct complexes: a TatABC complex, containing multiple copies of TatA, TatB and TatC subunits, and a separate TatA complex, containing only TatA subunits. Substrates initially bind to the TatABC complex, which probably triggers association of the separate TatA complex to form the active translocon.

Its subcellular location is the cell inner membrane. Part of the twin-arginine translocation (Tat) system that transports large folded proteins containing a characteristic twin-arginine motif in their signal peptide across membranes. Together with TatC, TatB is part of a receptor directly interacting with Tat signal peptides. TatB may form an oligomeric binding site that transiently accommodates folded Tat precursor proteins before their translocation. This Nitrosospira multiformis (strain ATCC 25196 / NCIMB 11849 / C 71) protein is Sec-independent protein translocase protein TatB.